Consider the following 43-residue polypeptide: uncharacterized protein (43 aa).

The segment at 13–43 (QLPRLSRPRQSHLPAQTPQPRLSYPKTRRQI) is disordered.

This is an uncharacterized protein from Clover yellow mosaic virus (CYMV).